A 323-amino-acid chain; its full sequence is Probable cell division protein WhiA (323 aa).

The segment at residues 275 to 309 (TLKELGEMLTTGQVSKSGINHRLRKLDQIAERLRS) is a DNA-binding region (H-T-H motif).

This sequence belongs to the WhiA family.

Functionally, involved in cell division and chromosome segregation. This Listeria monocytogenes serotype 4a (strain HCC23) protein is Probable cell division protein WhiA.